Consider the following 353-residue polypeptide: Photosystem II D2 protein (353 aa).

T2 carries the post-translational modification N-acetylthreonine. T2 bears the Phosphothreonine mark. A helical membrane pass occupies residues 41 to 61 (CAYFALGGWFTGTTFVTSWYT). Residue H118 participates in chlorophyll a binding. A helical membrane pass occupies residues 125-141 (GFMLRQFELARSVQLRP). Residues Q130 and N143 each contribute to the pheophytin a site. The chain crosses the membrane as a helical span at residues 153 to 166 (VFVSVFLIYPLGQS). H198 is a chlorophyll a binding site. A helical transmembrane segment spans residues 208-228 (AALLCAIHGATVENTLFEDGD). 2 residues coordinate a plastoquinone: H215 and F262. H215 lines the Fe cation pocket. H269 is a Fe cation binding site. The chain crosses the membrane as a helical span at residues 279–295 (GLWMSAIGVVGLALNLR).

It belongs to the reaction center PufL/M/PsbA/D family. As to quaternary structure, PSII is composed of 1 copy each of membrane proteins PsbA, PsbB, PsbC, PsbD, PsbE, PsbF, PsbH, PsbI, PsbJ, PsbK, PsbL, PsbM, PsbT, PsbX, PsbY, PsbZ, Psb30/Ycf12, at least 3 peripheral proteins of the oxygen-evolving complex and a large number of cofactors. It forms dimeric complexes. The cofactor is The D1/D2 heterodimer binds P680, chlorophylls that are the primary electron donor of PSII, and subsequent electron acceptors. It shares a non-heme iron and each subunit binds pheophytin, quinone, additional chlorophylls, carotenoids and lipids. There is also a Cl(-1) ion associated with D1 and D2, which is required for oxygen evolution. The PSII complex binds additional chlorophylls, carotenoids and specific lipids..

It localises to the plastid. Its subcellular location is the chloroplast thylakoid membrane. The catalysed reaction is 2 a plastoquinone + 4 hnu + 2 H2O = 2 a plastoquinol + O2. Its function is as follows. Photosystem II (PSII) is a light-driven water:plastoquinone oxidoreductase that uses light energy to abstract electrons from H(2)O, generating O(2) and a proton gradient subsequently used for ATP formation. It consists of a core antenna complex that captures photons, and an electron transfer chain that converts photonic excitation into a charge separation. The D1/D2 (PsbA/PsbD) reaction center heterodimer binds P680, the primary electron donor of PSII as well as several subsequent electron acceptors. D2 is needed for assembly of a stable PSII complex. In Cycas taitungensis (Prince sago), this protein is Photosystem II D2 protein.